We begin with the raw amino-acid sequence, 723 residues long: Protein Hook homolog (723 aa).

The Calponin-homology (CH) domain occupies 4–120 (TELCECLVQW…RLLQLILGCA (117 aa)). Coiled coils occupy residues 162–423 (VLPE…MQLQ) and 457–665 (EIKE…IVSA). Residues 682 to 723 (LANGGPMQGGQSFLARQRQATSRRTTVSTTHPGHARSVNFVN) form a disordered region. Low complexity predominate over residues 696–711 (ARQRQATSRRTTVSTT).

The protein belongs to the hook family. Interacts with microtubules.

It is found in the cytoplasm. It localises to the cytoskeleton. May function to promote vesicle trafficking and/or fusion. May act to link a number of membrane-bound organelles to the cytoskeleton. The protein is Protein Hook homolog of Branchiostoma floridae (Florida lancelet).